Reading from the N-terminus, the 983-residue chain is Isoleucine--tRNA ligase (983 aa).

The 'HIGH' region motif lies at 61–71 (PYANGELHVGH). Glu608 contacts L-isoleucyl-5'-AMP. A 'KMSKS' region motif is present at residues 649 to 653 (KMSKS). Position 652 (Lys652) interacts with ATP. Positions 952, 955, 972, and 975 each coordinate Zn(2+).

Belongs to the class-I aminoacyl-tRNA synthetase family. IleS type 1 subfamily. As to quaternary structure, monomer. Zn(2+) serves as cofactor.

It localises to the cytoplasm. The enzyme catalyses tRNA(Ile) + L-isoleucine + ATP = L-isoleucyl-tRNA(Ile) + AMP + diphosphate. Functionally, catalyzes the attachment of isoleucine to tRNA(Ile). As IleRS can inadvertently accommodate and process structurally similar amino acids such as valine, to avoid such errors it has two additional distinct tRNA(Ile)-dependent editing activities. One activity is designated as 'pretransfer' editing and involves the hydrolysis of activated Val-AMP. The other activity is designated 'posttransfer' editing and involves deacylation of mischarged Val-tRNA(Ile). In Gloeobacter violaceus (strain ATCC 29082 / PCC 7421), this protein is Isoleucine--tRNA ligase.